The chain runs to 991 residues: Seizure protein 6 (991 aa).

The signal sequence occupies residues 1–19; sequence MRPAALLLLPSLLALLAHG. At 20–922 the chain is on the extracellular side; sequence LSSEAPITGE…AASSALDAAH (903 aa). A disordered region spans residues 79–193; sequence EGLEREEAPQ…QEGPGDMDRP (115 aa). The span at 119-132 shows a compositional bias: low complexity; that stretch reads TSPTPAVAAAPTQP. Residues 175 to 184 show a composition bias toward polar residues; the sequence is PPSQAWTPTQ. A disulfide bridge connects residues C241 and C268. The region spanning 241 to 353 is the CUB 1 domain; it reads CSWNFSGPEG…HFRYQAYLLS (113 aa). A glycan (N-linked (GlcNAc...) asparagine) is linked at N286. The Sushi 1 domain maps to 352-411; that stretch reads LSCHFPRRPAYGDVTVTSLHPGGSAHFHCATGYQLKGARFLTCLNATQPFWDSQEPVCIA. 12 disulfides stabilise this stretch: C354/C394, C380/C409, C413/C440, C529/C571, C556/C586, C590/C616, C707/C749, C735/C762, C768/C810, C796/C827, C835/C877, and C863/C892. 3 N-linked (GlcNAc...) asparagine glycosylation sites follow: N396, N433, and N538. In terms of domain architecture, CUB 2 spans 413-524; it reads CGGVIRNATT…AGMALRYEAF (112 aa). Residues 527-588 form the Sushi 2 domain; the sequence is GHCYEPFVKY…WNETEPACRA (62 aa). Residues 590–701 form the CUB 3 domain; that stretch reads CSGEITDSAG…QGFVIHFFEV (112 aa). Sushi domains follow at residues 705–764, 766–829, and 833–894; these read DTCP…SCQR, TSCH…KCLL, and KPCH…ICRA. A helical transmembrane segment spans residues 923–943; sequence LAAAIFLPLVAMVLLVGGVYL. Residues 944–991 lie on the Cytoplasmic side of the membrane; it reads YFSRFQGKSPLQLPRTHPRPYNRITVESAFDNPTYETGSLSFAGDERI.

Belongs to the SEZ6 family. In terms of processing, glycosylated. Brain-specific. Expressed in extrasynaptic and synaptic subcellular fractions (at protein level). Expression correlates with the most active periods of cortical neurogenesis and neuronal maturation. Expression is restricted to the gray matter with higher levels in the forebrain including the olfactory bulb, anterior olfactory nuclei, olfactory tubercle, striatum, hippocampal CA1 pyramidal cell layer and cerebral cortex. Expression is up-regulated with the convulsant drug, pentylenetetrazole.

It localises to the cell membrane. The protein localises to the cell projection. The protein resides in the dendrite. It is found in the synapse. Its subcellular location is the secreted. It localises to the cytoplasm. May play a role in cell-cell recognition and in neuronal membrane signaling. Seems to be important for the achievement of the necessary balance between dendrite elongation and branching during the elaboration of a complex dendritic arbor. Involved in the development of appropriate excitatory synaptic connectivity. This chain is Seizure protein 6 (Sez6), found in Mus musculus (Mouse).